Reading from the N-terminus, the 198-residue chain is Peptidyl-tRNA hydrolase (198 aa).

Tyr14 is a binding site for tRNA. The Proton acceptor role is filled by His19. 3 residues coordinate tRNA: Tyr64, Asn66, and Asn113.

Belongs to the PTH family. As to quaternary structure, monomer.

It is found in the cytoplasm. It catalyses the reaction an N-acyl-L-alpha-aminoacyl-tRNA + H2O = an N-acyl-L-amino acid + a tRNA + H(+). Hydrolyzes ribosome-free peptidyl-tRNAs (with 1 or more amino acids incorporated), which drop off the ribosome during protein synthesis, or as a result of ribosome stalling. Functionally, catalyzes the release of premature peptidyl moieties from peptidyl-tRNA molecules trapped in stalled 50S ribosomal subunits, and thus maintains levels of free tRNAs and 50S ribosomes. The sequence is that of Peptidyl-tRNA hydrolase from Acidobacterium capsulatum (strain ATCC 51196 / DSM 11244 / BCRC 80197 / JCM 7670 / NBRC 15755 / NCIMB 13165 / 161).